The sequence spans 443 residues: D-serine dehydratase (443 aa).

Residue Lys118 is modified to N6-(pyridoxal phosphate)lysine.

Belongs to the serine/threonine dehydratase family. DsdA subfamily. In terms of assembly, monomer. Pyridoxal 5'-phosphate serves as cofactor.

It catalyses the reaction D-serine = pyruvate + NH4(+). The sequence is that of D-serine dehydratase from Escherichia coli O17:K52:H18 (strain UMN026 / ExPEC).